The sequence spans 406 residues: L-carnitine CoA-transferase (406 aa).

The CoA site is built by lysine 98 and arginine 105. Catalysis depends on aspartate 170, which acts as the Nucleophile.

This sequence belongs to the CoA-transferase III family. CaiB subfamily. Homodimer.

The protein resides in the cytoplasm. The catalysed reaction is crotonobetainyl-CoA + (R)-carnitine = crotonobetaine + (R)-carnitinyl-CoA. The enzyme catalyses 4-(trimethylamino)butanoyl-CoA + (R)-carnitine = (R)-carnitinyl-CoA + 4-(trimethylamino)butanoate. The protein operates within amine and polyamine metabolism; carnitine metabolism. Its function is as follows. Catalyzes the reversible transfer of the CoA moiety from gamma-butyrobetainyl-CoA to L-carnitine to generate L-carnitinyl-CoA and gamma-butyrobetaine. Is also able to catalyze the reversible transfer of the CoA moiety from gamma-butyrobetainyl-CoA or L-carnitinyl-CoA to crotonobetaine to generate crotonobetainyl-CoA. The chain is L-carnitine CoA-transferase from Proteus mirabilis (strain HI4320).